We begin with the raw amino-acid sequence, 198 residues long: UPF0314 protein Atu8092 (198 aa).

3 helical membrane-spanning segments follow: residues 14–34 (LRWF…LYAM), 64–84 (WYTP…WLLF), and 150–170 (VPVW…GWLI).

Belongs to the UPF0314 family.

The protein resides in the cell membrane. In Agrobacterium fabrum (strain C58 / ATCC 33970) (Agrobacterium tumefaciens (strain C58)), this protein is UPF0314 protein Atu8092.